The following is a 419-amino-acid chain: CCA-adding enzyme (419 aa).

The ATP site is built by glycine 8 and arginine 11. 2 residues coordinate CTP: glycine 8 and arginine 11. Aspartate 21 and aspartate 23 together coordinate Mg(2+). 3 residues coordinate ATP: arginine 91, arginine 137, and arginine 140. Positions 91, 137, and 140 each coordinate CTP.

This sequence belongs to the tRNA nucleotidyltransferase/poly(A) polymerase family. Bacterial CCA-adding enzyme type 2 subfamily. Mg(2+) serves as cofactor.

It carries out the reaction a tRNA precursor + 2 CTP + ATP = a tRNA with a 3' CCA end + 3 diphosphate. The enzyme catalyses a tRNA with a 3' CCA end + 2 CTP + ATP = a tRNA with a 3' CCACCA end + 3 diphosphate. Catalyzes the addition and repair of the essential 3'-terminal CCA sequence in tRNAs without using a nucleic acid template. Adds these three nucleotides in the order of C, C, and A to the tRNA nucleotide-73, using CTP and ATP as substrates and producing inorganic pyrophosphate. tRNA 3'-terminal CCA addition is required both for tRNA processing and repair. Also involved in tRNA surveillance by mediating tandem CCA addition to generate a CCACCA at the 3' terminus of unstable tRNAs. While stable tRNAs receive only 3'-terminal CCA, unstable tRNAs are marked with CCACCA and rapidly degraded. In Buchnera aphidicola subsp. Baizongia pistaciae (strain Bp), this protein is CCA-adding enzyme.